The primary structure comprises 135 residues: Small ribosomal subunit protein bS16m (135 aa).

The N-terminal 34 residues, 1-34, are a transit peptide targeting the mitochondrion; it reads MVQLTTVLCKAYRGGHLTIRLALGGCTNRPFYRI. At T130 the chain carries Phosphothreonine.

The protein belongs to the bacterial ribosomal protein bS16 family. Component of the mitochondrial ribosome small subunit (28S) which comprises a 12S rRNA and about 30 distinct proteins.

It is found in the mitochondrion. In Bos taurus (Bovine), this protein is Small ribosomal subunit protein bS16m (MRPS16).